An 80-amino-acid chain; its full sequence is Cytochrome c oxidase subunit 7A1, mitochondrial (80 aa).

Residues 1-21 (MRALRVSQALVRSFSSTARNR) constitute a mitochondrion transit peptide. Over 22 to 46 (FENRVAEKQKLFQEDNGLPVHLKGG) the chain is Mitochondrial matrix. A helical membrane pass occupies residues 47–75 (ATDNILYRVTMTLCLGGTLYSLYCLGWAS). Over 76–80 (FPHKK) the chain is Mitochondrial intermembrane.

It belongs to the cytochrome c oxidase VIIa family. In terms of assembly, component of the complex IV (CIV, cytochrome c oxidase), a multisubunit enzyme composed of 14 subunits. The complex is composed of a catalytic core of 3 subunits MT-CO1, MT-CO2 and MT-CO3, encoded in the mitochondrial DNA, and 11 supernumerary subunits COX4I1 (or COX4I2), COX5A, COX5B, COX6A2 (or COX6A1), COX6B1 (or COX6B2), COX6C, COX7A1 (or COX7A2), COX7B, COX7C, COX8B and NDUFA4, which are encoded in the nuclear genome. The complex exists as a monomer or a dimer and forms supercomplexes (SCs) in the inner mitochondrial membrane with NADH-ubiquinone oxidoreductase (complex I, CI) and ubiquinol-cytochrome c oxidoreductase (cytochrome b-c1 complex, complex III, CIII), resulting in different assemblies (supercomplex SCI(1)III(2)IV(1) and megacomplex MCI(2)III(2)IV(2)).

The protein localises to the mitochondrion inner membrane. The protein operates within energy metabolism; oxidative phosphorylation. In terms of biological role, component of the mitochondrial respiratory complex IV (CIV, also named cytochrome c oxidase complex), the last enzyme in the mitochondrial electron transport chain which drives oxidative phosphorylation. The CIV complex is the component of the respiratory chain that catalyzes the reduction of oxygen to water. Acts as an assembly factor that specifically drives the homodimerization of CIV complexes, mediating the formation of mitochondrial respiratory supercomplexes (respirasomes) containing two CIV: supercomplxes with two molecules of CIV show improved activity. Despite being highly expressed in brown adipose tissue, not required for thermogenesis. The sequence is that of Cytochrome c oxidase subunit 7A1, mitochondrial (COX7A1) from Bos taurus (Bovine).